The following is a 445-amino-acid chain: NAD-specific glutamate dehydrogenase (445 aa).

Residue lysine 124 is part of the active site.

It belongs to the Glu/Leu/Phe/Val dehydrogenases family. As to quaternary structure, homohexamer.

The protein localises to the cell surface. It catalyses the reaction L-glutamate + NAD(+) + H2O = 2-oxoglutarate + NH4(+) + NADH + H(+). Functionally, probably involved in degradation rather than biosynthesis of glutamate. The protein is NAD-specific glutamate dehydrogenase (gdh) of Porphyromonas gingivalis (strain ATCC 33277 / DSM 20709 / CIP 103683 / JCM 12257 / NCTC 11834 / 2561).